Consider the following 299-residue polypeptide: Non-structural protein V (299 aa).

The segment at Ser-40–Gly-94 is disordered. Residues Tyr-110–Val-120 are interaction with host STAT1. Low complexity predominate over residues Ser-133 to Gly-143. Disordered regions lie at residues Ser-133 to Arg-168 and Pro-204 to Lys-229. Over residues Gly-144 to Thr-160 the composition is skewed to acidic residues. 8 residues coordinate Zn(2+): His-232, Cys-251, Cys-255, Cys-267, Cys-269, Cys-272, Cys-276, and Cys-279.

This sequence belongs to the paramyxoviruses V protein family. Interacts with host IFIH1/MDA5 and DHX58/LGP2; these interactions are involved in the inhibition of the host type I interferon signaling pathway. Interacts with host TYK2; this interaction inhibits the type I interferon signaling pathway without affecting the type II pathway. Interacts with host IRF7; this interaction inhibits IRF7 translocation to the nucleus. Interacts with host CHUK. Interacts with host RELA/p65; this interaction inhibits the nuclear translocation of NF-KappaB. Interacts (via N-terminus) with host STAT1 and JAK1; these interactions inhibit STAT1 phosphorylation by Jak1 and thereby the type I interferon signaling pathway. Interacts (via C-terminus) with host STAT2; this interaction is involved in the inhibition of the host type I interferon signaling pathway. Forms a complex with host PPP1CA and PPP1CC; this interaction prevents dephosphorylation of host IFIH1/MDA5 and leads to the inhibition of the host type I interferon signaling pathway. Interacts with host IRF9; this interaction prevents the binding of IRF9 to STAT2 and thereby the type I interferon signaling pathway. Interacts with host RIGI regulatory protein (via CARDs domain) and host TRIM25 (via SPRY domain); these interactions prevent TRIM25-mediated ubiquitination of RIG-I and disrupts downstream RIG-I signaling.

The protein resides in the host cytoplasm. Functionally, plays an essential role in the inhibition of host immune response. Prevents the establishment of cellular antiviral state by blocking interferon-alpha/beta (IFN-alpha/beta) production and signaling pathway. Interacts with host IFIH1/MDA5 and DHX58/LGP2 to inhibit the transduction pathway involved in the activation of IFN-beta promoter, thus protecting the virus against cell antiviral state. Blocks the type I interferon signaling pathway by interacting with host TYK2 and thereby inhibiting downstream STAT1 and STAT2 phosphorylation. Blocks the type I interferon signaling pathway by disrupting the RIG-I signaling pathway. Moderately affects the type II interferon signaling. Prevents PP1alpha/gamma-mediated dephosphorylation of host IFIH1/MDA5 and thus blocks its activation. The sequence is that of Non-structural protein V (P/V) from Homo sapiens (Human).